Consider the following 91-residue polypeptide: Elongation factor 1-beta (91 aa).

Belongs to the EF-1-beta/EF-1-delta family.

Promotes the exchange of GDP for GTP in EF-1-alpha/GDP, thus allowing the regeneration of EF-1-alpha/GTP that could then be used to form the ternary complex EF-1-alpha/GTP/AAtRNA. The polypeptide is Elongation factor 1-beta (Thermococcus gammatolerans (strain DSM 15229 / JCM 11827 / EJ3)).